The following is a 199-amino-acid chain: N-(5'-phosphoribosyl)anthranilate isomerase (199 aa).

Belongs to the TrpF family.

The catalysed reaction is N-(5-phospho-beta-D-ribosyl)anthranilate = 1-(2-carboxyphenylamino)-1-deoxy-D-ribulose 5-phosphate. It functions in the pathway amino-acid biosynthesis; L-tryptophan biosynthesis; L-tryptophan from chorismate: step 3/5. The protein is N-(5'-phosphoribosyl)anthranilate isomerase of Streptococcus pneumoniae (strain Hungary19A-6).